Here is a 328-residue protein sequence, read N- to C-terminus: MSGHHEAKPYQPRRGPAPADEEAAPAAAADEAEAEAEVEAMERYEQEQEYEEGEEGEEEEYEGGEGVPMDADASAAAVAGMDPHGEMVPVAGGEAGGGYPHVASNTLTLSFQGEVYVFESVSAERVQAVLLLLGGRELAPGSGSVPSSSAAYSKKMNFPHRMASLMRFREKRKERNFDKKIRYTVRKEVALRMQRNRGQFTSSKSKAEEATSVITSSEGSPNWGAVEGRPPSAAECHHCGISAASTPMMRRGPDGPRTLCNACGLMWANKGTMREVTKGPPVPLQIVPAATNDVQNGIVEATGVEQHNSAVEEAVSAANGHESQSGVA.

The interval 1-68 (MSGHHEAKPY…EEYEGGEGVP (68 aa)) is disordered. Residues 14-29 (RGPAPADEEAAPAAAA) show a composition bias toward low complexity. Composition is skewed to acidic residues over residues 30 to 39 (DEAEAEAEVE) and 47 to 63 (EQEY…EYEG). The Tify domain maps to 100-135 (PHVASNTLTLSFQGEVYVFESVSAERVQAVLLLLGG). One can recognise a CCT domain in the interval 161–203 (RMASLMRFREKRKERNFDKKIRYTVRKEVALRMQRNRGQFTSS). A disordered region spans residues 198 to 231 (GQFTSSKSKAEEATSVITSSEGSPNWGAVEGRPP). Residues 236–263 (CHHCGISAASTPMMRRGPDGPRTLCNAC) form a GATA-type zinc finger.

This sequence belongs to the type IV zinc-finger family. Class C subfamily.

The protein resides in the nucleus. Transcriptional activator that specifically binds 5'-GATA-3' or 5'-GAT-3' motifs within gene promoters. This is GATA transcription factor 17 from Oryza sativa subsp. japonica (Rice).